A 335-amino-acid polypeptide reads, in one-letter code: Fructose-1,6-bisphosphatase class 1 (335 aa).

Glu-90, Asp-112, Leu-114, and Asp-115 together coordinate Mg(2+). Substrate is bound by residues 115–118 (DGSS), Asn-210, and Lys-276. Residue Glu-282 participates in Mg(2+) binding.

The protein belongs to the FBPase class 1 family. Homotetramer. It depends on Mg(2+) as a cofactor.

The protein localises to the cytoplasm. The enzyme catalyses beta-D-fructose 1,6-bisphosphate + H2O = beta-D-fructose 6-phosphate + phosphate. The protein operates within carbohydrate biosynthesis; gluconeogenesis. This chain is Fructose-1,6-bisphosphatase class 1, found in Ectopseudomonas mendocina (strain ymp) (Pseudomonas mendocina).